The primary structure comprises 537 residues: Probable protein kinase UbiB (537 aa).

A helical membrane pass occupies residues Leu24–Trp44. A Protein kinase domain is found at Arg126 to Leu494. ATP is bound by residues Leu132–Val140 and Lys154. Asp289 functions as the Proton acceptor in the catalytic mechanism. 2 helical membrane passes run Ala493–Val513 and Leu515–Val535.

This sequence belongs to the ABC1 family. UbiB subfamily.

Its subcellular location is the cell inner membrane. The protein operates within cofactor biosynthesis; ubiquinone biosynthesis [regulation]. Functionally, is probably a protein kinase regulator of UbiI activity which is involved in aerobic coenzyme Q (ubiquinone) biosynthesis. This Pseudomonas entomophila (strain L48) protein is Probable protein kinase UbiB.